The sequence spans 851 residues: DNA mismatch repair protein MutS (851 aa).

602–609 (GPNMSGKS) is an ATP binding site.

Belongs to the DNA mismatch repair MutS family.

Functionally, this protein is involved in the repair of mismatches in DNA. It is possible that it carries out the mismatch recognition step. This protein has a weak ATPase activity. This Streptococcus pyogenes serotype M4 (strain MGAS10750) protein is DNA mismatch repair protein MutS.